Reading from the N-terminus, the 453-residue chain is Allantoinase (453 aa).

Residues H59, H61, K146, H186, H242, and D315 each coordinate Zn(2+). K146 is modified (N6-carboxylysine).

It belongs to the metallo-dependent hydrolases superfamily. Allantoinase family. Homotetramer. Zn(2+) is required as a cofactor. Post-translationally, carboxylation allows a single lysine to coordinate two zinc ions.

It carries out the reaction (S)-allantoin + H2O = allantoate + H(+). The protein operates within nitrogen metabolism; (S)-allantoin degradation; allantoate from (S)-allantoin: step 1/1. Functionally, catalyzes the conversion of allantoin (5-ureidohydantoin) to allantoic acid by hydrolytic cleavage of the five-member hydantoin ring. This is Allantoinase from Salmonella agona (strain SL483).